The chain runs to 226 residues: ATP synthase F(0) complex subunit a (226 aa).

A run of 6 helical transmembrane segments spans residues 11–31, 68–88, 97–117, 138–158, 164–184, and 194–214; these read APTI…TLLI, WSLM…LGLL, QLSM…ITGL, IPML…ALAV, ITAG…LSTI, and VLLM…AYVF.

This sequence belongs to the ATPase A chain family. In terms of assembly, component of the ATP synthase complex composed at least of ATP5F1A/subunit alpha, ATP5F1B/subunit beta, ATP5MC1/subunit c (homooctomer), MT-ATP6/subunit a, MT-ATP8/subunit 8, ATP5ME/subunit e, ATP5MF/subunit f, ATP5MG/subunit g, ATP5MK/subunit k, ATP5MJ/subunit j, ATP5F1C/subunit gamma, ATP5F1D/subunit delta, ATP5F1E/subunit epsilon, ATP5PF/subunit F6, ATP5PB/subunit b, ATP5PD/subunit d, ATP5PO/subunit OSCP. ATP synthase complex consists of a soluble F(1) head domain (subunits alpha(3) and beta(3)) - the catalytic core - and a membrane F(0) domain - the membrane proton channel (subunits c, a, 8, e, f, g, k and j). These two domains are linked by a central stalk (subunits gamma, delta, and epsilon) rotating inside the F1 region and a stationary peripheral stalk (subunits F6, b, d, and OSCP). Interacts with DNAJC30; interaction is direct.

It localises to the mitochondrion inner membrane. It catalyses the reaction H(+)(in) = H(+)(out). Functionally, subunit a, of the mitochondrial membrane ATP synthase complex (F(1)F(0) ATP synthase or Complex V) that produces ATP from ADP in the presence of a proton gradient across the membrane which is generated by electron transport complexes of the respiratory chain. ATP synthase complex consist of a soluble F(1) head domain - the catalytic core - and a membrane F(1) domain - the membrane proton channel. These two domains are linked by a central stalk rotating inside the F(1) region and a stationary peripheral stalk. During catalysis, ATP synthesis in the catalytic domain of F(1) is coupled via a rotary mechanism of the central stalk subunits to proton translocation. With the subunit c (ATP5MC1), forms the proton-conducting channel in the F(0) domain, that contains two crucial half-channels (inlet and outlet) that facilitate proton movement from the mitochondrial intermembrane space (IMS) into the matrix. Protons are taken up via the inlet half-channel and released through the outlet half-channel, following a Grotthuss mechanism. The polypeptide is ATP synthase F(0) complex subunit a (Papio hamadryas (Hamadryas baboon)).